Here is an 87-residue protein sequence, read N- to C-terminus: Putative outer membrane protein ArbH (87 aa).

A signal peptide spans 1 to 23; that stretch reads MKIKNSYLVIASLLYPISFISTA.

It belongs to the porin LamB (TC 1.B.3) family.

It is found in the cell outer membrane. May be a sugar porin with a broad carbohydrate specificity. This is Putative outer membrane protein ArbH (arbH) from Dickeya chrysanthemi (Pectobacterium chrysanthemi).